A 213-amino-acid chain; its full sequence is Thymidylate kinase (213 aa).

10–17 (GLEGAGKT) is an ATP binding site.

This sequence belongs to the thymidylate kinase family.

It carries out the reaction dTMP + ATP = dTDP + ADP. Functionally, phosphorylation of dTMP to form dTDP in both de novo and salvage pathways of dTTP synthesis. This Escherichia coli O7:K1 (strain IAI39 / ExPEC) protein is Thymidylate kinase.